Consider the following 358-residue polypeptide: MKPEEIERMRDEALAAFAAADSLDALQEAKVAHTGGASPLALANREIGALPPQAKAEAGKRVGMARGAVNKALAARQEELEAERDARVLVEEAVDVTLPHDRVPAGARHPLTTLSERIEDIFVAMGYEVAEGPEAEAEWFNFDALNIGPDHPARGEADTFFVQGPEGGAESGVVLRTHTSPVQIRSALTRELPVYVICPGRVYRTDELDATHTPVFHQVELLAVDEGLTMADLKGTLDHMVQSLFGAEMKTRLRPNFFPFTEPSAEMDMLCYVCKGASVGNPDRPCRTCSSEGWIELGGCGMVNPRVLTACGIDPEKYSGFAFGFGIERMLMFRHNVEDMRDMVEGDVRFTRPFGMEI.

Glu262 serves as a coordination point for Mg(2+).

It belongs to the class-II aminoacyl-tRNA synthetase family. Phe-tRNA synthetase alpha subunit type 1 subfamily. As to quaternary structure, tetramer of two alpha and two beta subunits. Requires Mg(2+) as cofactor.

The protein localises to the cytoplasm. The catalysed reaction is tRNA(Phe) + L-phenylalanine + ATP = L-phenylalanyl-tRNA(Phe) + AMP + diphosphate + H(+). The protein is Phenylalanine--tRNA ligase alpha subunit (pheS) of Streptomyces coelicolor (strain ATCC BAA-471 / A3(2) / M145).